A 516-amino-acid polypeptide reads, in one-letter code: 2-isopropylmalate synthase (516 aa).

A Pyruvate carboxyltransferase domain is found at Val5–Ser267. The Mn(2+) site is built by Asp14, His202, His204, and Asn238. A regulatory domain region spans residues Lys392 to Val516.

It belongs to the alpha-IPM synthase/homocitrate synthase family. LeuA type 1 subfamily. Homodimer. Mn(2+) is required as a cofactor.

Its subcellular location is the cytoplasm. The enzyme catalyses 3-methyl-2-oxobutanoate + acetyl-CoA + H2O = (2S)-2-isopropylmalate + CoA + H(+). Its pathway is amino-acid biosynthesis; L-leucine biosynthesis; L-leucine from 3-methyl-2-oxobutanoate: step 1/4. Catalyzes the condensation of the acetyl group of acetyl-CoA with 3-methyl-2-oxobutanoate (2-ketoisovalerate) to form 3-carboxy-3-hydroxy-4-methylpentanoate (2-isopropylmalate). The sequence is that of 2-isopropylmalate synthase from Vibrio cholerae serotype O1 (strain ATCC 39315 / El Tor Inaba N16961).